A 169-amino-acid chain; its full sequence is S-ribosylhomocysteine lyase (169 aa).

Fe cation-binding residues include H54, H58, and C128.

The protein belongs to the LuxS family. Homodimer. The cofactor is Fe cation.

It catalyses the reaction S-(5-deoxy-D-ribos-5-yl)-L-homocysteine = (S)-4,5-dihydroxypentane-2,3-dione + L-homocysteine. Its function is as follows. Involved in the synthesis of autoinducer 2 (AI-2) which is secreted by bacteria and is used to communicate both the cell density and the metabolic potential of the environment. The regulation of gene expression in response to changes in cell density is called quorum sensing. Catalyzes the transformation of S-ribosylhomocysteine (RHC) to homocysteine (HC) and 4,5-dihydroxy-2,3-pentadione (DPD). This is S-ribosylhomocysteine lyase from Tolumonas auensis (strain DSM 9187 / NBRC 110442 / TA 4).